The sequence spans 376 residues: Nucleoside diphosphate kinase homolog 7 (376 aa).

A DM10 domain is found at histidine 3–lysine 91.

It belongs to the NDK family. In terms of assembly, component of sperm flagellar doublet microtubules. Component of the gamma-tubulin ring complex. In terms of processing, undergoes autophosphorylation. As to expression, expressed in airway epithelial cells.

The protein localises to the cytoplasm. It is found in the cytoskeleton. The protein resides in the microtubule organizing center. Its subcellular location is the centrosome. It localises to the nucleus. The protein localises to the spindle. It is found in the cilium axoneme. The protein resides in the flagellum axoneme. Its subcellular location is the cell projection. It localises to the cilium. Its function is as follows. Possesses an intrinsic kinase activity. Displays 3'-5' exonuclease activity with a preference for single-stranded DNA. Does not seem to have nucleoside diphosphate kinase activity. Functional component of the gamma-tubulin ring complex, implicated in the regulation of the microtubule-nucleating activity of the gamma-tubulin ring complex in centrosomes, in a kinase activity-dependent manner. Part of the dynein-decorated doublet microtubules (DMTs) in cilia axoneme, which is required for motile cilia beating. This Homo sapiens (Human) protein is Nucleoside diphosphate kinase homolog 7.